A 670-amino-acid polypeptide reads, in one-letter code: UvrABC system protein B (670 aa).

The 383-residue stretch at 51–433 (DGLKKGEPFQ…SSRVVEQIIR (383 aa)) folds into the Helicase ATP-binding domain. 64–71 (GVTGSGKT) provides a ligand contact to ATP. A Beta-hairpin motif is present at residues 117–140 (YYDYYQPESYLPAKDQYIEKDAMI). Residues 453–612 (DVMQEIRKIV…IVPTTIRKPI (160 aa)) form the Helicase C-terminal domain. The region spanning 631-666 (PNVIIELDAEMREAADRLDFERAIQVRELIKKLEKE) is the UVR domain.

Belongs to the UvrB family. Forms a heterotetramer with UvrA during the search for lesions. Interacts with UvrC in an incision complex.

It is found in the cytoplasm. In terms of biological role, the UvrABC repair system catalyzes the recognition and processing of DNA lesions. A damage recognition complex composed of 2 UvrA and 2 UvrB subunits scans DNA for abnormalities. Upon binding of the UvrA(2)B(2) complex to a putative damaged site, the DNA wraps around one UvrB monomer. DNA wrap is dependent on ATP binding by UvrB and probably causes local melting of the DNA helix, facilitating insertion of UvrB beta-hairpin between the DNA strands. Then UvrB probes one DNA strand for the presence of a lesion. If a lesion is found the UvrA subunits dissociate and the UvrB-DNA preincision complex is formed. This complex is subsequently bound by UvrC and the second UvrB is released. If no lesion is found, the DNA wraps around the other UvrB subunit that will check the other stand for damage. In Methanosarcina mazei (strain ATCC BAA-159 / DSM 3647 / Goe1 / Go1 / JCM 11833 / OCM 88) (Methanosarcina frisia), this protein is UvrABC system protein B.